Reading from the N-terminus, the 832-residue chain is WD repeat-containing protein 75 (832 aa).

WD repeat units lie at residues 4 to 43, 47 to 86, 90 to 134, 148 to 187, 196 to 233, 239 to 278, 281 to 320, 326 to 364, 378 to 425, 432 to 474, 485 to 523, 527 to 567, and 572 to 609; these read KTDI…KVYS, EEWL…KLWD, GILI…QLVA, KELS…YFFR, LKAT…RLWR, KEYT…VQWQ, DMSK…SIIE, SGLI…QFYS, QQEY…KLWA, SFVL…KAWC, YWSC…TLWS, WELL…CCWN, and ALEW…FVFK. Disordered regions lie at residues 704–723 and 759–811; these read QHKL…HTQG and VREE…AQER. Positions 764–785 are enriched in acidic residues; that stretch reads DSSEQEMDSEKEEEESEEEMEA. Basic and acidic residues predominate over residues 799-811; the sequence is DEQKPKLSKAQER.

Component of the proposed t-UTP subcomplex of the ribosomal small subunit (SSU) processome. SSU processome is composed of more than 70 proteins and the RNA chaperone small nucleolar RNA (snoRNA) U3.

Its subcellular location is the nucleus. The protein localises to the nucleolus. In terms of biological role, ribosome biogenesis factor. Part of the small subunit (SSU) processome, first precursor of the small eukaryotic ribosomal subunit. During the assembly of the SSU processome in the nucleolus, many ribosome biogenesis factors, an RNA chaperone and ribosomal proteins associate with the nascent pre-rRNA and work in concert to generate RNA folding, modifications, rearrangements and cleavage as well as targeted degradation of pre-ribosomal RNA by the RNA exosome. Involved in nucleolar processing of pre-18S ribosomal RNA. Required for optimal pre-ribosomal RNA transcription by RNA polymerase I. In Danio rerio (Zebrafish), this protein is WD repeat-containing protein 75 (wdr75).